Reading from the N-terminus, the 106-residue chain is MMVTALQILFSLIRYVTETIRSVSVLFSDSEDEPDDEASSSDKDVSDATLPARTTYSIVIFLAGSVRRDKREMLSISQKGTLSPAMLPRPAYRGIEREDRGGVQSK.

Disordered stretches follow at residues F27–D47 and S83–K106. Residues D29 to S39 are compositionally biased toward acidic residues. Residues G94–K106 show a composition bias toward basic and acidic residues.

It is found in the mitochondrion. This is an uncharacterized protein from Arabidopsis thaliana (Mouse-ear cress).